A 335-amino-acid chain; its full sequence is Transcription factor bHLH63 (335 aa).

Residues 110–160 are disordered; it reads MTMNRDDLVEEGEEEKSKITEQNNGSTKSIKKMKHKAKKEENNFSNDSSKV. The region spanning 178–228 is the bHLH domain; it reads QATDSHSIAERVRREKISERMKFLQDLVPGCDKITGKAGMLDEIINYVQSL.

As to quaternary structure, homodimer. Interacts with IBH1. Binds reversibly to CRY2 after blue light illumination. Expressed constitutively in roots, leaves, and stems.

Its subcellular location is the nucleus. Transcription factor that binds DNA to G box 5'-CACGTG-3' and, to a lower extent, to E-box 5'-CANNTG-3' in vitro. Binds to chromatin DNA of the FT gene and promotes its expression, and thus triggers flowering in response to blue light. This is Transcription factor bHLH63 (BHLH63) from Arabidopsis thaliana (Mouse-ear cress).